The primary structure comprises 502 residues: Probable glycine dehydrogenase (decarboxylating) subunit 2 (502 aa).

Lys-273 carries the post-translational modification N6-(pyridoxal phosphate)lysine.

The protein belongs to the GcvP family. C-terminal subunit subfamily. The glycine cleavage system is composed of four proteins: P, T, L and H. In this organism, the P 'protein' is a heterodimer of two subunits. Requires pyridoxal 5'-phosphate as cofactor.

The enzyme catalyses N(6)-[(R)-lipoyl]-L-lysyl-[glycine-cleavage complex H protein] + glycine + H(+) = N(6)-[(R)-S(8)-aminomethyldihydrolipoyl]-L-lysyl-[glycine-cleavage complex H protein] + CO2. Functionally, the glycine cleavage system catalyzes the degradation of glycine. The P protein binds the alpha-amino group of glycine through its pyridoxal phosphate cofactor; CO(2) is released and the remaining methylamine moiety is then transferred to the lipoamide cofactor of the H protein. In Thermococcus onnurineus (strain NA1), this protein is Probable glycine dehydrogenase (decarboxylating) subunit 2.